The primary structure comprises 331 residues: Gamma-parvin (331 aa).

Position 1 is an N-acetylmethionine (M1). Positions 17–39 (EPPAEEELSKGGKKKYLPPTSRK) are disordered. Calponin-homology (CH) domains lie at 44–151 (EELQ…KRFQ) and 210–317 (NAVK…CKHT).

Belongs to the parvin family. In terms of assembly, interacts with ILK; the interaction promotes the establishment of cell polarity required for leukocyte migration. Interacts with ARHGEF6; the guanine nucleotide exchange factor activity of ARHGEF6 is essential for the PARVG-induced enhancement of cell spreading. Expressed predominantly in lymphoid organs, including spleen, thymus, lymph node, bone marrow and peripheral blood leukocytes and moderately in the digestive tract, including stomach, duodenum, jejunum, ileum, ileocecum and appendix, as well as in lung and liver. Also expressed in tumors, but at a lower level than in the corresponding normal tissues.

It is found in the cell junction. The protein localises to the focal adhesion. It localises to the cell membrane. The protein resides in the cytoplasm. Its subcellular location is the cytoskeleton. Its function is as follows. Plays a role with ILK in promoting the cell adhesion and spreading of leukocytes. This is Gamma-parvin (PARVG) from Homo sapiens (Human).